We begin with the raw amino-acid sequence, 364 residues long: Peroxidase (364 aa).

An N-terminal signal peptide occupies residues 1 to 20; that stretch reads MKLSLFSTFAAVIIGALALP. The residue at position 21 (Gln21) is a Pyrrolidone carboxylic acid. 4 disulfide bridges follow: Cys32–Cys44, Cys43–Cys313, Cys63–Cys149, and Cys277–Cys342. His76 acts as the Proton acceptor in catalysis. Asp77, Gly95, Asp97, and Ser99 together coordinate Ca(2+). Asn163 carries N-linked (GlcNAc...) (high mannose) asparagine glycosylation. Position 204 (His204) interacts with heme b. Ser205, Asp222, Thr224, Val227, and Asp229 together coordinate Ca(2+).

Belongs to the peroxidase family. Ligninase subfamily. The cofactor is Ca(2+). Heme b serves as cofactor.

Its subcellular location is the secreted. It carries out the reaction 2 a phenolic donor + H2O2 = 2 a phenolic radical donor + 2 H2O. This is Peroxidase from Arthromyces ramosus.